Consider the following 350-residue polypeptide: Biotin synthase (350 aa).

A Radical SAM core domain is found at 41-268 (NEVQISRLLS…LSRVRLSAGR (228 aa)). [4Fe-4S] cluster-binding residues include cysteine 56, cysteine 60, and cysteine 63. Residues cysteine 100, cysteine 131, cysteine 191, and arginine 263 each coordinate [2Fe-2S] cluster.

It belongs to the radical SAM superfamily. Biotin synthase family. Homodimer. [4Fe-4S] cluster serves as cofactor. It depends on [2Fe-2S] cluster as a cofactor.

The enzyme catalyses (4R,5S)-dethiobiotin + (sulfur carrier)-SH + 2 reduced [2Fe-2S]-[ferredoxin] + 2 S-adenosyl-L-methionine = (sulfur carrier)-H + biotin + 2 5'-deoxyadenosine + 2 L-methionine + 2 oxidized [2Fe-2S]-[ferredoxin]. Its pathway is cofactor biosynthesis; biotin biosynthesis; biotin from 7,8-diaminononanoate: step 2/2. Catalyzes the conversion of dethiobiotin (DTB) to biotin by the insertion of a sulfur atom into dethiobiotin via a radical-based mechanism. The chain is Biotin synthase from Shewanella baltica (strain OS223).